The chain runs to 165 residues: MSRVALYPGSFDPVTNGHVDVVRHAVVLCDQLIVAIGVHPGKTPLFPAGERLAMVRSVFAPVAEKAGCAFDCTTYDDLTVAAAQKAGATILIRGLRDGTDLDYEMQIAGMNETMAPGVHTVFVPASPGVRPITATLVRQIAAMGGDVSAFVPQSVASSLKTKFAG.

Ser10 is a binding site for substrate. Residues 10 to 11 (SF) and His18 contribute to the ATP site. Lys42, Thr79, and Arg93 together coordinate substrate. ATP-binding positions include 94 to 96 (GLR), Glu104, and 129 to 135 (VRPITAT).

The protein belongs to the bacterial CoaD family. In terms of assembly, homohexamer. It depends on Mg(2+) as a cofactor.

The protein localises to the cytoplasm. The catalysed reaction is (R)-4'-phosphopantetheine + ATP + H(+) = 3'-dephospho-CoA + diphosphate. It functions in the pathway cofactor biosynthesis; coenzyme A biosynthesis; CoA from (R)-pantothenate: step 4/5. Its function is as follows. Reversibly transfers an adenylyl group from ATP to 4'-phosphopantetheine, yielding dephospho-CoA (dPCoA) and pyrophosphate. The chain is Phosphopantetheine adenylyltransferase from Nitrobacter hamburgensis (strain DSM 10229 / NCIMB 13809 / X14).